The primary structure comprises 132 residues: Heat shock protein 15 homolog (132 aa).

One can recognise an S4 RNA-binding domain in the interval 11–73 (VRLDKWLWAA…DEREVRVLQV (63 aa)). Basic and acidic residues-rich tracts occupy residues 94–105 (LKKRAENSEARR) and 114–125 (PERRPDKQERRQ). Residues 94–132 (LKKRAENSEARRFNSQFAPSPERRPDKQERRQLIKVKQY) form a disordered region.

Belongs to the HSP15 family.

May play an important role in binding of nucleic acid. More specific for RNA. The polypeptide is Heat shock protein 15 homolog (hslR) (Aeromonas salmonicida).